We begin with the raw amino-acid sequence, 719 residues long: Photosystem I P700 chlorophyll a apoprotein A1 (719 aa).

8 helical membrane passes run 59–82, 145–168, 184–208, 280–298, 335–358, 374–400, 422–444, and 520–538; these read IFGAHFGQLAIIFIWLSGMYFHGA, LYCTAVGALIFAGLMFFAGWFHYH, LNHHLAGLLGLGSLGWAGHQIHVSL, TAHHHLAIAVLFLVAGHMY, WHAQLAINLAMLGSLTIIVSHHMY, LSLFTHHMWIGGFLVVGAAAHAAIFMV, AIISHLNWVCIFLGFHSFGLYIH, and FLVHHIHAFTIHVTVLILL. Residues cysteine 562 and cysteine 571 each coordinate [4Fe-4S] cluster. A run of 2 helical transmembrane segments spans residues 578–599 and 653–675; these read HVFLGLFWMYNSISVVIFHFSW and LSAYGLLFLGAHFVWAFSLMFLF. Position 664 (histidine 664) interacts with chlorophyll a'. The chlorophyll a site is built by methionine 672 and tyrosine 680. Tryptophan 681 contacts phylloquinone. A helical membrane pass occupies residues 713 to 719; the sequence is AVGVTHT.

This sequence belongs to the PsaA/PsaB family. In terms of assembly, the PsaA/B heterodimer binds the P700 chlorophyll special pair and subsequent electron acceptors. PSI consists of a core antenna complex that captures photons, and an electron transfer chain that converts photonic excitation into a charge separation. The eukaryotic PSI reaction center is composed of at least 11 subunits. P700 is a chlorophyll a/chlorophyll a' dimer, A0 is one or more chlorophyll a, A1 is one or both phylloquinones and FX is a shared 4Fe-4S iron-sulfur center. is required as a cofactor.

Its subcellular location is the plastid. The protein localises to the chloroplast thylakoid membrane. The enzyme catalyses reduced [plastocyanin] + hnu + oxidized [2Fe-2S]-[ferredoxin] = oxidized [plastocyanin] + reduced [2Fe-2S]-[ferredoxin]. Its function is as follows. PsaA and PsaB bind P700, the primary electron donor of photosystem I (PSI), as well as the electron acceptors A0, A1 and FX. PSI is a plastocyanin-ferredoxin oxidoreductase, converting photonic excitation into a charge separation, which transfers an electron from the donor P700 chlorophyll pair to the spectroscopically characterized acceptors A0, A1, FX, FA and FB in turn. Oxidized P700 is reduced on the lumenal side of the thylakoid membrane by plastocyanin. This is Photosystem I P700 chlorophyll a apoprotein A1 from Asplenium nidus (Bird's nest fern).